The following is a 153-amino-acid chain: Peritrophin-1 (153 aa).

The N-terminal stretch at 1–17 (MKVSASLVLLLAAAVLA) is a signal peptide. Chitin-binding type-2 domains lie at 18–79 (DDRC…QCAP) and 92–153 (SPNC…QCEE). Disulfide bonds link Cys-56/Cys-69 and Cys-130/Cys-143. N-linked (GlcNAc...) asparagine glycosylation is present at Asn-63.

Glycosylated. As to expression, adult peritrophic membrane.

In terms of biological role, binds chitin but not cellulose. May be involved in the spatial organization of PM. In Anopheles gambiae (African malaria mosquito), this protein is Peritrophin-1 (Aper1).